Reading from the N-terminus, the 578-residue chain is Pentatricopeptide repeat-containing protein At4g22760 (578 aa).

PPR repeat units lie at residues 68 to 102 (DSFSWGCLVRFLSQHRKFKETVDVYIDMHNSGIPP), 103 to 137 (SSHAVTSVLRACGKMENMVDGKPIHAQALKNGLCG), 138 to 168 (CVYVQTGLVGLYSRLGYIELAKKAFDDIAEK), 169 to 203 (NTVSWNSLLHGYLESGELDEARRVFDKIPEKDAVS), 204 to 230 (WNLIISSYAKKGDMGNACSLFSAMPLK), 231 to 261 (SPASWNILIGGYVNCREMKLARTYFDAMPQK), 262 to 292 (NGVSWITMISGYTKLGDVQSAEELFRLMSKK), 293 to 327 (DKLVYDAMIACYTQNGKPKDALKLFAQMLERNSYI), 330 to 364 (DEITLSSVVSANSQLGNTSFGTWVESYITEHGIKI), 365 to 395 (DDLLSTSLIDLYMKGGDFAKAFKMFSNLNKK), 396 to 430 (DTVSYSAMIMGCGINGMATEANSLFTAMIEKKIPP), 431 to 465 (NVVTFTGLLSAYSHSGLVQEGYKCFNSMKDHNLEP), and 466 to 496 (SADHYGIMVDMLGRAGRLEEAYELIKSMPMQ). The type E motif stretch occupies residues 501–576 (VWGALLLASG…TLGCSWVEGS (76 aa)).

The protein belongs to the PPR family. PCMP-E subfamily.

This Arabidopsis thaliana (Mouse-ear cress) protein is Pentatricopeptide repeat-containing protein At4g22760 (PCMP-E6).